Consider the following 292-residue polypeptide: Phosphatidylserine decarboxylase proenzyme (292 aa).

Catalysis depends on charge relay system; for autoendoproteolytic cleavage activity residues Asp-89, His-146, and Ser-252. The active-site Schiff-base intermediate with substrate; via pyruvic acid; for decarboxylase activity is the Ser-252. The residue at position 252 (Ser-252) is a Pyruvic acid (Ser); by autocatalysis.

The protein belongs to the phosphatidylserine decarboxylase family. PSD-B subfamily. Prokaryotic type I sub-subfamily. Heterodimer of a large membrane-associated beta subunit and a small pyruvoyl-containing alpha subunit. Pyruvate is required as a cofactor. In terms of processing, is synthesized initially as an inactive proenzyme. Formation of the active enzyme involves a self-maturation process in which the active site pyruvoyl group is generated from an internal serine residue via an autocatalytic post-translational modification. Two non-identical subunits are generated from the proenzyme in this reaction, and the pyruvate is formed at the N-terminus of the alpha chain, which is derived from the carboxyl end of the proenzyme. The autoendoproteolytic cleavage occurs by a canonical serine protease mechanism, in which the side chain hydroxyl group of the serine supplies its oxygen atom to form the C-terminus of the beta chain, while the remainder of the serine residue undergoes an oxidative deamination to produce ammonia and the pyruvoyl prosthetic group on the alpha chain. During this reaction, the Ser that is part of the protease active site of the proenzyme becomes the pyruvoyl prosthetic group, which constitutes an essential element of the active site of the mature decarboxylase.

It is found in the cell membrane. It catalyses the reaction a 1,2-diacyl-sn-glycero-3-phospho-L-serine + H(+) = a 1,2-diacyl-sn-glycero-3-phosphoethanolamine + CO2. Its pathway is phospholipid metabolism; phosphatidylethanolamine biosynthesis; phosphatidylethanolamine from CDP-diacylglycerol: step 2/2. Catalyzes the formation of phosphatidylethanolamine (PtdEtn) from phosphatidylserine (PtdSer). This is Phosphatidylserine decarboxylase proenzyme from Shewanella baltica (strain OS185).